We begin with the raw amino-acid sequence, 362 residues long: Mannose-1-phosphate guanyltransferase (362 aa).

It belongs to the transferase hexapeptide repeat family.

The protein localises to the cytoplasm. It carries out the reaction alpha-D-mannose 1-phosphate + GTP + H(+) = GDP-alpha-D-mannose + diphosphate. Its pathway is nucleotide-sugar biosynthesis; GDP-alpha-D-mannose biosynthesis; GDP-alpha-D-mannose from alpha-D-mannose 1-phosphate (GTP route): step 1/1. Functionally, involved in cell wall synthesis where it is required for glycosylation. Involved in cell cycle progression through cell-size checkpoint. This is Mannose-1-phosphate guanyltransferase (MPG1) from Candida albicans (strain SC5314 / ATCC MYA-2876) (Yeast).